A 156-amino-acid chain; its full sequence is Small ribosomal subunit protein uS7 (156 aa).

It belongs to the universal ribosomal protein uS7 family. Part of the 30S ribosomal subunit. Contacts proteins S9 and S11.

One of the primary rRNA binding proteins, it binds directly to 16S rRNA where it nucleates assembly of the head domain of the 30S subunit. Is located at the subunit interface close to the decoding center, probably blocks exit of the E-site tRNA. The chain is Small ribosomal subunit protein uS7 from Desulforamulus reducens (strain ATCC BAA-1160 / DSM 100696 / MI-1) (Desulfotomaculum reducens).